A 124-amino-acid polypeptide reads, in one-letter code: Apolipoprotein C-IV (124 aa).

The N-terminal stretch at 1-27 (MSLLRCRPRDLPSVSLSVLFLVSFVAS) is a signal peptide. Asn107 carries N-linked (GlcNAc...) asparagine glycosylation.

This sequence belongs to the apolipoprotein C4 family. In terms of tissue distribution, expressed by the liver and secreted in plasma.

The protein resides in the secreted. In terms of biological role, may participate in lipoprotein metabolism. The protein is Apolipoprotein C-IV (Apoc4) of Mus musculus (Mouse).